We begin with the raw amino-acid sequence, 251 residues long: uncharacterized protein (251 aa).

The Response regulatory domain occupies 3-118 (KVIICDDERI…QLEHILDILV (116 aa)). D55 is modified (4-aspartylphosphate). The region spanning 152 to 249 (NQILSQIKQH…HMSPSDYNKQ (98 aa)) is the HTH araC/xylS-type domain. 2 DNA-binding regions (H-T-H motif) span residues 169–190 (LDLI…KEHV) and 216–239 (HYEI…KKYL).

Post-translationally, phosphorylated by SERP2405.

It localises to the cytoplasm. Probable member of the two-component regulatory system SERP2405/SERP2406. This is an uncharacterized protein from Staphylococcus epidermidis (strain ATCC 35984 / DSM 28319 / BCRC 17069 / CCUG 31568 / BM 3577 / RP62A).